The following is a 249-amino-acid chain: Glucosamine-6-phosphate deaminase (249 aa).

The active-site Proton acceptor; for enolization step is D67. The active-site For ring-opening step is N136. The Proton acceptor; for ring-opening step role is filled by H138. Residue E143 is the For ring-opening step of the active site.

Belongs to the glucosamine/galactosamine-6-phosphate isomerase family. NagB subfamily.

The enzyme catalyses alpha-D-glucosamine 6-phosphate + H2O = beta-D-fructose 6-phosphate + NH4(+). The protein operates within amino-sugar metabolism; N-acetylneuraminate degradation; D-fructose 6-phosphate from N-acetylneuraminate: step 5/5. Functionally, catalyzes the reversible isomerization-deamination of glucosamine 6-phosphate (GlcN6P) to form fructose 6-phosphate (Fru6P) and ammonium ion. In Clostridioides difficile (strain 630) (Peptoclostridium difficile), this protein is Glucosamine-6-phosphate deaminase.